Consider the following 313-residue polypeptide: D-alanine--D-alanine ligase (313 aa).

One can recognise an ATP-grasp domain in the interval 108–308 (KLVWQQTGVP…YSELVVKVLS (201 aa)). ATP is bound at residue 138–193 (VAKLGLPLFVKPASEGSSVAVLKVKTADALPAALAEAATHDKIVIVEKSIEGGGEY). The Mg(2+) site is built by aspartate 262, glutamate 275, and asparagine 277.

This sequence belongs to the D-alanine--D-alanine ligase family. Requires Mg(2+) as cofactor. The cofactor is Mn(2+).

It localises to the cytoplasm. It catalyses the reaction 2 D-alanine + ATP = D-alanyl-D-alanine + ADP + phosphate + H(+). It participates in cell wall biogenesis; peptidoglycan biosynthesis. Functionally, cell wall formation. The polypeptide is D-alanine--D-alanine ligase (Burkholderia cenocepacia (strain HI2424)).